The chain runs to 793 residues: Probable serine/threonine-protein kinase fnkA (793 aa).

Positions 11 to 358 (WEILSQLGTG…IINLISHNFI (348 aa)) constitute a Protein kinase domain. Residues 17–25 (LGTGAFGRV) and lysine 46 contribute to the ATP site. The active-site Proton acceptor is the aspartate 138. FNIP repeat units lie at residues 403-444 (FNQT…FGAR), 470-514 (YNQP…ILGD), 515-557 (YDQK…LGYR), 558-601 (FNKA…LGYC), and 691-733 (FIRP…LGSR).

The protein belongs to the protein kinase superfamily. STE Ser/Thr protein kinase family. Mg(2+) is required as a cofactor.

The enzyme catalyses L-seryl-[protein] + ATP = O-phospho-L-seryl-[protein] + ADP + H(+). It carries out the reaction L-threonyl-[protein] + ATP = O-phospho-L-threonyl-[protein] + ADP + H(+). The protein is Probable serine/threonine-protein kinase fnkA of Dictyostelium discoideum (Social amoeba).